Consider the following 232-residue polypeptide: Histone H1-II (232 aa).

Over residues 1-18 (MSDPAPEVAPAAPVASPA) the composition is skewed to low complexity. 2 disordered regions span residues 1–44 (MSDP…PPVS) and 103–232 (GKGA…AKKA). One can recognise an H15 domain in the interval 39 to 114 (THPPVSEMVV…GASGSFKLPA (76 aa)). 2 stretches are compositionally biased toward basic residues: residues 149–171 (SIAK…KSTK) and 179–232 (AAKK…AKKA).

Belongs to the histone H1/H5 family.

The protein localises to the nucleus. It localises to the chromosome. Its function is as follows. Histones H1 are necessary for the condensation of nucleosome chains into higher-order structures. The sequence is that of Histone H1-II from Glyptotendipes barbipes (Midge).